The primary structure comprises 105 residues: Small ribosomal subunit protein uS10 (105 aa).

Belongs to the universal ribosomal protein uS10 family. In terms of assembly, part of the 30S ribosomal subunit.

In terms of biological role, involved in the binding of tRNA to the ribosomes. This is Small ribosomal subunit protein uS10 from Rickettsia rickettsii (strain Iowa).